The chain runs to 199 residues: Ribosome maturation factor RimM (199 aa).

One can recognise a PRC barrel domain in the interval 93 to 169 (DDEYYHADLI…IELPDEIDGE (77 aa)). The disordered stretch occupies residues 164–199 (DEIDGEDRASADESASAEDDAAAPNSARHPRESGDP).

The protein belongs to the RimM family. In terms of assembly, binds ribosomal protein uS19.

The protein resides in the cytoplasm. Its function is as follows. An accessory protein needed during the final step in the assembly of 30S ribosomal subunit, possibly for assembly of the head region. Essential for efficient processing of 16S rRNA. May be needed both before and after RbfA during the maturation of 16S rRNA. It has affinity for free ribosomal 30S subunits but not for 70S ribosomes. The protein is Ribosome maturation factor RimM of Bradyrhizobium sp. (strain ORS 278).